Here is a 375-residue protein sequence, read N- to C-terminus: Carbamoyl phosphate synthase small chain (375 aa).

Positions 1 to 186 (MKAILALEDG…IVDGTYAWPG (186 aa)) are CPSase. Serine 45, glycine 238, and glycine 240 together coordinate L-glutamine. One can recognise a Glutamine amidotransferase type-1 domain in the interval 190 to 375 (RLVVFDMGIK…RNLVRKETGK (186 aa)). The Nucleophile role is filled by cysteine 265. L-glutamine-binding residues include leucine 266, glutamine 269, asparagine 307, glycine 309, and phenylalanine 310. Catalysis depends on residues histidine 348 and glutamate 350.

It belongs to the CarA family. In terms of assembly, composed of two chains; the small (or glutamine) chain promotes the hydrolysis of glutamine to ammonia, which is used by the large (or ammonia) chain to synthesize carbamoyl phosphate. Tetramer of heterodimers (alpha,beta)4.

The enzyme catalyses hydrogencarbonate + L-glutamine + 2 ATP + H2O = carbamoyl phosphate + L-glutamate + 2 ADP + phosphate + 2 H(+). It carries out the reaction L-glutamine + H2O = L-glutamate + NH4(+). It participates in amino-acid biosynthesis; L-arginine biosynthesis; carbamoyl phosphate from bicarbonate: step 1/1. Its pathway is pyrimidine metabolism; UMP biosynthesis via de novo pathway; (S)-dihydroorotate from bicarbonate: step 1/3. In terms of biological role, small subunit of the glutamine-dependent carbamoyl phosphate synthetase (CPSase). CPSase catalyzes the formation of carbamoyl phosphate from the ammonia moiety of glutamine, carbonate, and phosphate donated by ATP, constituting the first step of 2 biosynthetic pathways, one leading to arginine and/or urea and the other to pyrimidine nucleotides. The small subunit (glutamine amidotransferase) binds and cleaves glutamine to supply the large subunit with the substrate ammonia. The sequence is that of Carbamoyl phosphate synthase small chain from Solidesulfovibrio magneticus (strain ATCC 700980 / DSM 13731 / RS-1) (Desulfovibrio magneticus).